A 587-amino-acid polypeptide reads, in one-letter code: Heavy metal-associated isoprenylated plant protein 33 (587 aa).

An HMA domain is found at 9-72 (IQTCVLKVNI…KLLKSGKHAE (64 aa)). C20 and C23 together coordinate a metal cation. 5 disordered regions span residues 98–146 (QIDH…MVIP), 176–261 (LKLP…KPMM), 287–449 (AHKN…PMSN), 462–504 (PGGG…QQQQ), and 532–587 (YARP…CNIM). Composition is skewed to gly residues over residues 104–113 (KGGGGGGGGP) and 121–140 (KIGG…GGGP). Low complexity predominate over residues 194 to 208 (PMNKNPQMPNNPNQK). Residues 215 to 248 (PDDDDEEDFSDEFDDEFDEDDDEFDDDLEDDEFD) show a composition bias toward acidic residues. 3 stretches are compositionally biased toward gly residues: residues 290–300 (NGGGPGPAGGK), 312–419 (MGGG…GGGP), and 428–445 (GAMG…GGPG). The segment covering 471-483 (SAEAPPGYFQGQV) has biased composition (low complexity). 2 stretches are compositionally biased toward pro residues: residues 534 to 547 (RPPP…PQPQ) and 554 to 565 (YPYPYPYPPQYP). Polar residues predominate over residues 578–587 (DENTSSCNIM). C584 is modified (cysteine methyl ester). C584 carries the S-farnesyl cysteine lipid modification. The propeptide at 585-587 (NIM) is removed in mature form.

Belongs to the HIPP family.

In terms of biological role, heavy-metal-binding protein. The protein is Heavy metal-associated isoprenylated plant protein 33 of Arabidopsis thaliana (Mouse-ear cress).